Consider the following 302-residue polypeptide: Heme A synthase (302 aa).

The Cytoplasmic segment spans residues Met1–Lys8. A helical membrane pass occupies residues Trp9–Thr29. Residues Lys30–Ser67 are Extracellular-facing. The cysteines at positions 37 and 44 are disulfide-linked. Glu60 is an active-site residue. Residue His63 coordinates heme o. Residues Gly68 to Ile88 form a helical membrane-spanning segment. The Cytoplasmic portion of the chain corresponds to Lys89–Pro93. Residues Leu94–Met114 form a helical membrane-spanning segment. Over Trp115–Leu122 the chain is Extracellular. The chain crosses the membrane as a helical span at residues Ala123 to Ile143. A heme o-binding site is contributed by His125. Over Tyr144–Leu161 the chain is Cytoplasmic. A helical transmembrane segment spans residues Arg162–Val182. The Extracellular portion of the chain corresponds to Arg183–Arg215. His214 contacts heme b. A helical transmembrane segment spans residues Gly216–Tyr236. The Cytoplasmic portion of the chain corresponds to Arg237–Tyr244. The helical transmembrane segment at Gly245–Ile265 threads the bilayer. At Thr266–Phe271 the chain is on the extracellular side. A helical membrane pass occupies residues Ile272–Ile292. Residue His276 participates in heme b binding. Topologically, residues Leu293–Gly302 are cytoplasmic.

Belongs to the COX15/CtaA family. Type 1 subfamily. In terms of assembly, interacts with CtaB. Heme b serves as cofactor.

The protein resides in the cell membrane. The enzyme catalyses Fe(II)-heme o + 2 A + H2O = Fe(II)-heme a + 2 AH2. It functions in the pathway porphyrin-containing compound metabolism; heme A biosynthesis; heme A from heme O: step 1/1. Its function is as follows. Catalyzes the conversion of heme O to heme A by two successive hydroxylations of the methyl group at C8. The first hydroxylation forms heme I, the second hydroxylation results in an unstable dihydroxymethyl group, which spontaneously dehydrates, resulting in the formyl group of heme A. The polypeptide is Heme A synthase (Staphylococcus saprophyticus subsp. saprophyticus (strain ATCC 15305 / DSM 20229 / NCIMB 8711 / NCTC 7292 / S-41)).